Consider the following 286-residue polypeptide: Probable ketoamine kinase YniA (286 aa).

91–93 contacts ATP; the sequence is DYL. Aspartate 193 (proton acceptor) is an active-site residue.

This sequence belongs to the fructosamine kinase family.

Ketoamine kinase that phosphorylates ketoamines on the third carbon of the sugar moiety to generate ketoamine 3-phosphate. The protein is Probable ketoamine kinase YniA (yniA) of Escherichia coli O157:H7.